Here is a 338-residue protein sequence, read N- to C-terminus: uncharacterized protein (338 aa).

3 helical membrane passes run isoleucine 11 to isoleucine 31, isoleucine 249 to alanine 269, and valine 318 to leucine 338.

The protein resides in the cell membrane. This is an uncharacterized protein from Methanocaldococcus jannaschii (strain ATCC 43067 / DSM 2661 / JAL-1 / JCM 10045 / NBRC 100440) (Methanococcus jannaschii).